Consider the following 141-residue polypeptide: Hemoglobin subunit alpha-A (141 aa).

The Globin domain maps to 1-141 (VLSGSDKTNV…VGNVLTAKYR (141 aa)). Residue histidine 58 participates in O2 binding. Histidine 87 lines the heme b pocket.

It belongs to the globin family. Heterotetramer of two alpha chains and two beta chains. In terms of tissue distribution, red blood cells.

Its function is as follows. Involved in oxygen transport from the lung to the various peripheral tissues. The sequence is that of Hemoglobin subunit alpha-A (HBAA) from Vultur gryphus (Andean condor).